Here is a 996-residue protein sequence, read N- to C-terminus: Alanine--tRNA ligase, chloroplastic/mitochondrial (996 aa).

4 residues coordinate Zn(2+): His-677, His-681, Cys-779, and His-783.

Belongs to the class-II aminoacyl-tRNA synthetase family. Monomer. The cofactor is Zn(2+).

Its subcellular location is the plastid. The protein localises to the chloroplast. The protein resides in the mitochondrion. It catalyses the reaction tRNA(Ala) + L-alanine + ATP = L-alanyl-tRNA(Ala) + AMP + diphosphate. Functionally, catalyzes the attachment of alanine to tRNA(Ala) in a two-step reaction: alanine is first activated by ATP to form Ala-AMP and then transferred to the acceptor end of tRNA(Ala). Also edits incorrectly charged tRNA(Ala) via its editing domain. This Oryza sativa subsp. indica (Rice) protein is Alanine--tRNA ligase, chloroplastic/mitochondrial.